The following is a 218-amino-acid chain: MSSKPVLGYWDIRGLAQPIRLLLAYLDVDYEDKRYQLGANFDRSAWLTEKFNLGLDFPNLPYYIDGNVKLSQTLAILRYIGRKYKLTGANEPEELRVSLVEQQVVDGNQSLSRVAYDPNADKLKPDFLKTLPDSVKQLSHFLGNSPFVAGTSITYVDFWLYEYLVKLSVLVPEVFGQFDNLKKFVERIESLPRVSVYIKAQQPKLFNGPMAKWNGQYA.

The region spanning 3–88 is the GST N-terminal domain; the sequence is SKPVLGYWDI…YIGRKYKLTG (86 aa). Glutathione is bound by residues 9 to 10, 43 to 46, K50, 59 to 60, and 72 to 73; these read YW, RSAW, NL, and QT. The 117-residue stretch at 90 to 206 folds into the GST C-terminal domain; sequence NEPEELRVSL…YIKAQQPKLF (117 aa). Y116 contributes to the substrate binding site.

Belongs to the GST superfamily. Mu family.

It carries out the reaction RX + glutathione = an S-substituted glutathione + a halide anion + H(+). Functionally, conjugation of reduced glutathione to a wide number of exogenous and endogenous hydrophobic electrophiles. This chain is Glutathione S-transferase, found in Tyrophagus putrescentiae (Mold mite).